The sequence spans 832 residues: Protein P (832 aa).

The segment at 1 to 177 (MPLSYQHFRR…FCGSPYSWEQ (177 aa)) is terminal protein domain (TP). A spacer region spans residues 178 to 335 (DLQHGAESIH…YCLSLIVNLL (158 aa)). Disordered stretches follow at residues 186–218 (IHQQ…QSQQ) and 239–266 (TARR…SCLY). Residues 336–679 (EDWGPCDEYG…YLNLYPVARQ (344 aa)) form a polymerase/reverse transcriptase domain (RT) region. A Reverse transcriptase domain is found at 346–589 (EHHIRIPRTP…YSLHFMGYVI (244 aa)). Mg(2+) contacts are provided by aspartate 418, aspartate 540, and aspartate 541.

This sequence belongs to the hepadnaviridae P protein family.

It catalyses the reaction DNA(n) + a 2'-deoxyribonucleoside 5'-triphosphate = DNA(n+1) + diphosphate. The enzyme catalyses Endonucleolytic cleavage to 5'-phosphomonoester.. Its activity is regulated as follows. Activated by host HSP70 and HSP40 in vitro to be able to bind the epsilon loop of the pgRNA. Because deletion of the RNase H region renders the protein partly chaperone-independent, the chaperones may be needed indirectly to relieve occlusion of the RNA-binding site by this domain. Inhibited by several reverse-transcriptase inhibitors: Lamivudine, Adefovir and Entecavir. Its function is as follows. Multifunctional enzyme that converts the viral RNA genome into dsDNA in viral cytoplasmic capsids. This enzyme displays a DNA polymerase activity that can copy either DNA or RNA templates, and a ribonuclease H (RNase H) activity that cleaves the RNA strand of RNA-DNA heteroduplexes in a partially processive 3'- to 5'-endonucleasic mode. Neo-synthesized pregenomic RNA (pgRNA) are encapsidated together with the P protein, and reverse-transcribed inside the nucleocapsid. Initiation of reverse-transcription occurs first by binding the epsilon loop on the pgRNA genome, and is initiated by protein priming, thereby the 5'-end of (-)DNA is covalently linked to P protein. Partial (+)DNA is synthesized from the (-)DNA template and generates the relaxed circular DNA (RC-DNA) genome. After budding and infection, the RC-DNA migrates in the nucleus, and is converted into a plasmid-like covalently closed circular DNA (cccDNA). The activity of P protein does not seem to be necessary for cccDNA generation, and is presumably released from (+)DNA by host nuclear DNA repair machinery. This Homo sapiens (Human) protein is Protein P.